Reading from the N-terminus, the 102-residue chain is uncharacterized protein (102 aa).

2 consecutive transmembrane segments (helical) span residues 38-58 (FYVWSSRIYVLVLVVQAQLIL) and 64-84 (VLFLLLFFLHNFFLLPQLFQF).

It is found in the membrane. This is an uncharacterized protein from Saccharomyces cerevisiae (strain ATCC 204508 / S288c) (Baker's yeast).